The chain runs to 1151 residues: Ankyrin and IPT/TIG repeat-containing protein C26H5.05 (1151 aa).

Disordered regions lie at residues 77-104 (NLPSIAPPSLSHASSPNLSNSQDEAECL), 452-511 (KSRN…ENSR), and 516-535 (QLSASDSHSPNSKSTLKSVE). Over residues 87–98 (SHASSPNLSNSQ) the composition is skewed to polar residues. Positions 452-463 (KSRNLTKSEKTG) are enriched in basic and acidic residues. Composition is skewed to polar residues over residues 464 to 496 (KSNSQQAPSNHVLSKSNTVPNLVTGFPTRSDNP) and 517 to 532 (LSASDSHSPNSKSTLK). The 82-residue stretch at 658–739 (PLISRIIPNK…SSEAPVMFTY (82 aa)) folds into the IPT/TIG domain. ANK repeat units follow at residues 861–890 (SGRSLLHLTAACGLSNASTFLCNAGCDVNK) and 894–923 (LGYTPLHYASLYDHKDICVNLLSNGAKPDV). A disordered region spans residues 1041–1067 (PPPYSEFADDTTAQAGSSKRDSAISED). Basic and acidic residues predominate over residues 1058–1067 (SKRDSAISED). The helical transmembrane segment at 1113-1133 (MDFMLFSFWLPALLLLSIFGL) threads the bilayer.

The protein localises to the vacuole membrane. The chain is Ankyrin and IPT/TIG repeat-containing protein C26H5.05 from Schizosaccharomyces pombe (strain 972 / ATCC 24843) (Fission yeast).